Consider the following 279-residue polypeptide: Elongation factor Ts (279 aa).

The tract at residues 80–83 (TDFV) is involved in Mg(2+) ion dislocation from EF-Tu.

Belongs to the EF-Ts family.

It is found in the cytoplasm. Associates with the EF-Tu.GDP complex and induces the exchange of GDP to GTP. It remains bound to the aminoacyl-tRNA.EF-Tu.GTP complex up to the GTP hydrolysis stage on the ribosome. The protein is Elongation factor Ts (tsf) of Borreliella burgdorferi (strain ATCC 35210 / DSM 4680 / CIP 102532 / B31) (Borrelia burgdorferi).